Consider the following 208-residue polypeptide: MEVNIVNIANEVVGSIDLNPQVFGLEPRRDVLKEVVNWQLAKRRAGTHKAKGISDISGTTAKPYRQKHTGRARQGSLRSPQFRGGAVIFGPVPRSHEYSLNKKVRRLGLKVALSMKVAANKLVVLDSLDVDLKKTADAKGVFGNFAGHSSYLVVSESCKEEVVRACRNLRGVDLLKCVGINVLDILKHDCVILTVDTVKSLEGRLSNE.

The tract at residues 49 to 78 is disordered; sequence KAKGISDISGTTAKPYRQKHTGRARQGSLR.

Belongs to the universal ribosomal protein uL4 family. In terms of assembly, part of the 50S ribosomal subunit.

In terms of biological role, one of the primary rRNA binding proteins, this protein initially binds near the 5'-end of the 23S rRNA. It is important during the early stages of 50S assembly. It makes multiple contacts with different domains of the 23S rRNA in the assembled 50S subunit and ribosome. Its function is as follows. Forms part of the polypeptide exit tunnel. This is Large ribosomal subunit protein uL4 from Anaplasma phagocytophilum (strain HZ).